A 268-amino-acid chain; its full sequence is Elongation factor Ts (268 aa).

Residues 81-84 (TDFV) are involved in Mg(2+) ion dislocation from EF-Tu.

It belongs to the EF-Ts family.

The protein resides in the cytoplasm. In terms of biological role, associates with the EF-Tu.GDP complex and induces the exchange of GDP to GTP. It remains bound to the aminoacyl-tRNA.EF-Tu.GTP complex up to the GTP hydrolysis stage on the ribosome. The chain is Elongation factor Ts from Buchnera aphidicola subsp. Acyrthosiphon pisum (strain 5A).